We begin with the raw amino-acid sequence, 380 residues long: Histidinol-phosphate aminotransferase (380 aa).

Residue lysine 235 is modified to N6-(pyridoxal phosphate)lysine.

It belongs to the class-II pyridoxal-phosphate-dependent aminotransferase family. Histidinol-phosphate aminotransferase subfamily. As to quaternary structure, homodimer. The cofactor is pyridoxal 5'-phosphate.

The enzyme catalyses L-histidinol phosphate + 2-oxoglutarate = 3-(imidazol-4-yl)-2-oxopropyl phosphate + L-glutamate. Its pathway is amino-acid biosynthesis; L-histidine biosynthesis; L-histidine from 5-phospho-alpha-D-ribose 1-diphosphate: step 7/9. The protein is Histidinol-phosphate aminotransferase of Rhodococcus opacus (strain B4).